The sequence spans 579 residues: MDASKLPLGSFVGTTLLLFILYKLVKLAYYVGQAKNTGLPYTIVPVLETEFLGKLLTPLIRPLFTSRLSRGKGWPRWIRFSILDWAWEEKRRVHEELGDVFLVVSSEGLICYTADADMSWDVMNRRNEFLKPRDKYKVLEPYGPNVATTEGKAYNFHVRITAPPFNDGSGANDLVWNEASDQARALMESWSQENTTRDLSLDINRLTLAVIAYTGFGKRLDFKTEVSDLRNKIPPGYKMSLHHALHLVTTFMVKILLIPKWIMKMTSMKEIAVAHGELEKYMREMIRTETANLSKDSEYQSADAKGNLLTSVLRASAFEAKAAGRKQAFSEDEVLGNLFLYLLAGYETTANAMTYGFITLALRQDLQDRIIQEVDGVYAEAAAEGRTSLNYTDDFEKFQYTYGFMYEVFRLYPGVCIITKMVPKDTTITVYPENNSPQQHVLPAECRVYLNVNAVHYHERYWPDPWALKPDRWMGTIGATPNARSNKKVVAGDKSRQVRGTLMTFSGGARACLGRKFTQSEYISALATVLREYRIVLGEGMDAKVVKQEIDHLAAGTVTLAPLKYVKLALKKRTDVKTG.

Residues 6–25 form a helical membrane-spanning segment; the sequence is LPLGSFVGTTLLLFILYKLV. N-linked (GlcNAc...) asparagine glycosylation is found at asparagine 194, asparagine 292, and asparagine 390. Cysteine 512 contacts heme.

This sequence belongs to the cytochrome P450 family. The cofactor is heme.

It localises to the membrane. The protein operates within sesquiterpene biosynthesis. Functionally, cytochrome P450 monooxygenase; part of the gene cluster that mediates the biosynthesis of PR-toxin, a bicyclic sesquiterpene belonging to the eremophilane class and acting as a mycotoxin. The first step of the pathway is catalyzed by the aristolochene synthase which performs the cyclization of trans,trans-farnesyl diphosphate (FPP) to the bicyclic sesquiterpene aristolochene. Following the formation of aristolochene, the non-oxygenated aristolochene is converted to the trioxygenated intermediate eremofortin B, via 7-epi-neopetasone. This conversion appears to involve three enzymes, a hydroxysterol oxidase-like enzyme, the quinone-oxidase prx3 that forms the quinone-type-structure in the bicyclic nucleus of aristolochene with the C8-oxo group and the C-3 hydroxyl group, and the P450 monooxygenase prx9 that introduces the epoxide at the double bond between carbons 1 and 2. No monoxy or dioxy-intermediates have been reported to be released to the broth, so these three early oxidative reactions may be coupled together. Eremofortin B is further oxidized by another P450 monooxygenase, that introduces a second epoxide between carbons 7 and 11 prior to acetylation to eremofortin A by the acetyltransferase prx11. The second epoxidation may be performed by a second P450 monooxygenase. After the acetylation step, eremofortin A is converted to eremofortin C and then to PR-toxin. First the conversion of eremofortin A to eremofortin C proceeds by oxidation of the side chain of the molecule at C-12 and is catalyzed by the short-chain oxidoreductase prx1. The cytochrome P450 monooxygenase prx8 also plays a role in this step. The primary alcohol formed at C-12 is finally oxidized by the short-chain alcohol dehydrogenase prx4 that forms PR-toxin. This Penicillium rubens (strain ATCC 28089 / DSM 1075 / NRRL 1951 / Wisconsin 54-1255) (Penicillium chrysogenum) protein is Cytochrome P450 monooxygenase prx9.